Here is a 160-residue protein sequence, read N- to C-terminus: Small ribosomal subunit protein bS6 (160 aa).

The segment at 100-160 is disordered; the sequence is PSSVLARKSD…DDARETAGAE (61 aa). 2 stretches are compositionally biased toward basic and acidic residues: residues 106–116 and 136–160; these read RKSDDRGDRGN and RSSEDREEYRARGEQDDARETAGAE.

Belongs to the bacterial ribosomal protein bS6 family.

Functionally, binds together with bS18 to 16S ribosomal RNA. In Gluconobacter oxydans (strain 621H) (Gluconobacter suboxydans), this protein is Small ribosomal subunit protein bS6.